The sequence spans 492 residues: Ketol-acid reductoisomerase (NADP(+)) (492 aa).

Residues Ala15–Ser208 enclose the KARI N-terminal Rossmann domain. NADP(+) is bound by residues Cys45 to Gln48, Arg68, Arg76, Ser78, and Asp108 to Gln110. Residue His132 is part of the active site. Position 158 (Gly158) interacts with NADP(+). 2 KARI C-terminal knotted domains span residues Ser209 to Gln344 and Phe345 to Met485. Mg(2+) contacts are provided by Asp217, Glu221, Glu389, and Glu393. Ser414 provides a ligand contact to substrate.

It belongs to the ketol-acid reductoisomerase family. Mg(2+) serves as cofactor.

The enzyme catalyses (2R)-2,3-dihydroxy-3-methylbutanoate + NADP(+) = (2S)-2-acetolactate + NADPH + H(+). It carries out the reaction (2R,3R)-2,3-dihydroxy-3-methylpentanoate + NADP(+) = (S)-2-ethyl-2-hydroxy-3-oxobutanoate + NADPH + H(+). Its pathway is amino-acid biosynthesis; L-isoleucine biosynthesis; L-isoleucine from 2-oxobutanoate: step 2/4. It functions in the pathway amino-acid biosynthesis; L-valine biosynthesis; L-valine from pyruvate: step 2/4. Functionally, involved in the biosynthesis of branched-chain amino acids (BCAA). Catalyzes an alkyl-migration followed by a ketol-acid reduction of (S)-2-acetolactate (S2AL) to yield (R)-2,3-dihydroxy-isovalerate. In the isomerase reaction, S2AL is rearranged via a Mg-dependent methyl migration to produce 3-hydroxy-3-methyl-2-ketobutyrate (HMKB). In the reductase reaction, this 2-ketoacid undergoes a metal-dependent reduction by NADPH to yield (R)-2,3-dihydroxy-isovalerate. This Yersinia enterocolitica serotype O:8 / biotype 1B (strain NCTC 13174 / 8081) protein is Ketol-acid reductoisomerase (NADP(+)).